The primary structure comprises 609 residues: Arginine--tRNA ligase (609 aa).

A 'HIGH' region motif is present at residues 132–142; the sequence is ANPTSSLHVGH.

Belongs to the class-I aminoacyl-tRNA synthetase family. Monomer.

The protein resides in the cytoplasm. It catalyses the reaction tRNA(Arg) + L-arginine + ATP = L-arginyl-tRNA(Arg) + AMP + diphosphate. This is Arginine--tRNA ligase from Psychrobacter arcticus (strain DSM 17307 / VKM B-2377 / 273-4).